The following is a 146-amino-acid chain: Large ribosomal subunit protein uL14 (146 aa).

It belongs to the universal ribosomal protein uL14 family.

The sequence is that of Large ribosomal subunit protein uL14 (RPL23) from Encephalitozoon cuniculi (strain GB-M1) (Microsporidian parasite).